The sequence spans 244 residues: MSQFNLNELNALPKAEQAAALALVNGQLEHLTAQERVSWALENLPGEFVLSSSFGIQAAVCLHLVTRQQPDIPVILTDTGYLFPETYQFIDSLTEKLQLNLQVFRAQQSPAWQEARYGKLWEQGVEGIERYNDLNKVEPMNRALETLGAQTWFAGLRREQSGSRAKLPVLAIARGVFKLLPIIDWDNRQVYQYLTQHGLSYHPLWEQGYLSVGDTHTTRKWEPGMSEEETRFFGLKRECGLHES.

The active-site Nucleophile; cysteine thiosulfonate intermediate is Cys239.

The protein belongs to the PAPS reductase family. CysH subfamily.

It is found in the cytoplasm. It catalyses the reaction [thioredoxin]-disulfide + sulfite + adenosine 3',5'-bisphosphate + 2 H(+) = [thioredoxin]-dithiol + 3'-phosphoadenylyl sulfate. Its pathway is sulfur metabolism; hydrogen sulfide biosynthesis; sulfite from sulfate: step 3/3. Its function is as follows. Catalyzes the formation of sulfite from phosphoadenosine 5'-phosphosulfate (PAPS) using thioredoxin as an electron donor. The chain is Phosphoadenosine 5'-phosphosulfate reductase from Yersinia enterocolitica serotype O:8 / biotype 1B (strain NCTC 13174 / 8081).